The primary structure comprises 245 residues: Protein crossbronx (245 aa).

The UBC core domain occupies 20-177 (QQEYKILAEY…VQESIVESKS (158 aa)).

The protein belongs to the ubiquitin-conjugating enzyme family. FTS subfamily.

The protein is Protein crossbronx (cbx) of Drosophila virilis (Fruit fly).